Consider the following 529-residue polypeptide: Pre-rRNA-processing protein pro-1 (529 aa).

2 WD repeats span residues 136 to 175 (AHYQ…SADR) and 287 to 326 (GHSD…CLKV). A coiled-coil region spans residues 416–518 (ARNEAAKAEK…LKEINKQMYE (103 aa)). Positions 436-470 (TLGDDEDDAPEVGNQRRKSGKKNKKNRKNQKKNDF) are disordered. Over residues 450 to 465 (QRRKSGKKNKKNRKNQ) the composition is skewed to basic residues.

This sequence belongs to the WD repeat IPI3/WDR18 family. In terms of assembly, component of the PELP1 complex, composed of at least PELP1, TEX10 and WDR18. The complex interacts with pre-60S ribosome particles.

It is found in the nucleus. It localises to the nucleolus. The protein resides in the nucleoplasm. Its function is as follows. Component of the PELP1 complex involved in the nucleolar steps of 28S rRNA maturation and the subsequent nucleoplasmic transit of the pre-60S ribosomal subunit. Required for processing ITS2 sequences from rRNA intermediates during 26S rRNA maturation. Required in the soma to promote normal proliferation and prevent germline tumor formation. The sequence is that of Pre-rRNA-processing protein pro-1 from Caenorhabditis elegans.